The chain runs to 201 residues: Translation initiation factor IF-3 (201 aa).

It belongs to the IF-3 family. Monomer.

It localises to the cytoplasm. In terms of biological role, IF-3 binds to the 30S ribosomal subunit and shifts the equilibrium between 70S ribosomes and their 50S and 30S subunits in favor of the free subunits, thus enhancing the availability of 30S subunits on which protein synthesis initiation begins. This is Translation initiation factor IF-3 from Prochlorococcus marinus (strain SARG / CCMP1375 / SS120).